A 295-amino-acid chain; its full sequence is Deleted in azoospermia-like (295 aa).

The segment covering methionine 1 to asparagine 10 has biased composition (polar residues). The disordered stretch occupies residues methionine 1 to alanine 25. A compositionally biased stretch (low complexity) spans serine 11–alanine 25. Positions asparagine 40–arginine 115 constitute an RRM domain. The interval lysine 80–asparagine 132 is homodimerization. Residues alanine 167 to glutamine 190 form the DAZ domain. Tyrosine 276 carries the phosphotyrosine modification.

This sequence belongs to the RRM DAZ family. In terms of assembly, homodimer and heterodimer. Forms a heterodimer with DAZ. Interacts with BOLL, DAZAP1 and DAZAP2. Interacts with PUM2 Multiple DAZL RRMs can bind to a single RNA containing multiple GUU triplets. In terms of tissue distribution, testis specific.

The protein resides in the cytoplasm. It is found in the nucleus. Its function is as follows. RNA-binding protein, which is essential for gametogenesis in both males and females. Plays a central role during spermatogenesis. Acts by binding to the 3'-UTR of mRNA, specifically recognizing GUU triplets, and thereby regulating the translation of key transcripts. The polypeptide is Deleted in azoospermia-like (DAZL) (Macaca fascicularis (Crab-eating macaque)).